We begin with the raw amino-acid sequence, 333 residues long: D-alanine--D-alanine ligase (333 aa).

The ATP-grasp domain maps to lysine 124–methionine 329. Position 154–209 (alanine 154–glutamate 209) interacts with ATP. Residues aspartate 283, glutamate 296, and asparagine 298 each contribute to the Mg(2+) site.

It belongs to the D-alanine--D-alanine ligase family. It depends on Mg(2+) as a cofactor. Mn(2+) is required as a cofactor.

It localises to the cytoplasm. It catalyses the reaction 2 D-alanine + ATP = D-alanyl-D-alanine + ADP + phosphate + H(+). The protein operates within cell wall biogenesis; peptidoglycan biosynthesis. Cell wall formation. In Shewanella halifaxensis (strain HAW-EB4), this protein is D-alanine--D-alanine ligase.